Reading from the N-terminus, the 239-residue chain is C-8 sterol isomerase erg2 (239 aa).

N-linked (GlcNAc...) asparagine glycosylation occurs at Asn11. A helical transmembrane segment spans residues 27–47 (KFGFLAVFVAIFAALYSYLDA). Asn73 carries an N-linked (GlcNAc...) asparagine glycan.

The protein belongs to the ERG2 family.

The protein resides in the endoplasmic reticulum membrane. The enzyme catalyses fecosterol = episterol. It participates in steroid metabolism; ergosterol biosynthesis. In terms of biological role, C-8 sterol isomerase; part of the third module of ergosterol biosynthesis pathway that includes the late steps of the pathway. Erg2 catalyzes the reaction which results in unsaturation at C-7 in the B ring of sterols and thus converts fecosterol to episterol. The third module or late pathway involves the ergosterol synthesis itself through consecutive reactions that mainly occur in the endoplasmic reticulum (ER) membrane. Firstly, the squalene synthase erg9 catalyzes the condensation of 2 farnesyl pyrophosphate moieties to form squalene, which is the precursor of all steroids. Squalene synthase is crucial for balancing the incorporation of farnesyl diphosphate (FPP) into sterol and nonsterol isoprene synthesis. Secondly, squalene is converted into lanosterol by the consecutive action of the squalene epoxidase erg1 and the lanosterol synthase erg7. Then, the delta(24)-sterol C-methyltransferase erg6 methylates lanosterol at C-24 to produce eburicol. Eburicol is the substrate of the sterol 14-alpha demethylase encoded by cyp51A and cyp51B, to yield 4,4,24-trimethyl ergosta-8,14,24(28)-trienol. The C-14 reductase erg24 then reduces the C14=C15 double bond which leads to 4,4-dimethylfecosterol. A sequence of further demethylations at C-4, involving the C-4 demethylation complex containing the C-4 methylsterol oxidases erg25A or erg25B, the sterol-4-alpha-carboxylate 3-dehydrogenase erg26 and the 3-keto-steroid reductase erg27, leads to the production of fecosterol via 4-methylfecosterol. The C-8 sterol isomerase erg2 then catalyzes the reaction which results in unsaturation at C-7 in the B ring of sterols and thus converts fecosterol to episterol. The sterol-C5-desaturase erg3B then catalyzes the introduction of a C-5 double bond in the B ring to produce 5-dehydroepisterol. The 2 other sterol-C5-desaturases, erg3A and erg3C, seem to be less important in ergosterol biosynthesis. The C-22 sterol desaturase erg5 further converts 5-dehydroepisterol into ergosta-5,7,22,24(28)-tetraen-3beta-ol by forming the C-22(23) double bond in the sterol side chain. Finally, ergosta-5,7,22,24(28)-tetraen-3beta-ol is substrate of the C-24(28) sterol reductases erg4A and erg4B to produce ergosterol. Possible alternative sterol biosynthetic pathways might exist from fecosterol to ergosterol, depending on the activities of the erg3 isoforms. The chain is C-8 sterol isomerase erg2 from Aspergillus fumigatus (strain ATCC MYA-4609 / CBS 101355 / FGSC A1100 / Af293) (Neosartorya fumigata).